Reading from the N-terminus, the 578-residue chain is Glycosyltransferase family 92 protein RCOM_0530710 (578 aa).

A helical membrane pass occupies residues serine 21–serine 43. The 237-residue stretch at tyrosine 295–proline 531 folds into the GT92 domain.

It belongs to the glycosyltransferase 92 family.

The protein localises to the membrane. In Ricinus communis (Castor bean), this protein is Glycosyltransferase family 92 protein RCOM_0530710.